The primary structure comprises 477 residues: Tripartite motif-containing protein 72 (477 aa).

Cys14, Cys17, Cys29, His31, Cys34, Cys37, Cys53, Cys56, Cys86, His89, Cys97, Asp100, Cys105, Cys108, His114, and His117 together coordinate Zn(2+). The segment at 14–57 (CPLCLQLFDAPVTAECGHSFCRACLIRVAGEPADDGTVACPCCQ) adopts an RING-type zinc-finger fold. A B box-type zinc finger spans residues 81-122 (VPQGHCEEHLDPLSIYCEQDRTLVCGVCASLGSHRGHRLLPA). The stretch at 135 to 232 (QQKAQLQEAC…EKVLEEVADK (98 aa)) forms a coiled coil. The residue at position 144 (Cys144) is an S-nitrosocysteine. Phosphoserine is present on Ser255. Positions 271–475 (DFKFQVWKKM…PLLLVGPDSE (205 aa)) constitute a B30.2/SPRY domain.

It belongs to the TRIM/RBCC family. In terms of assembly, homodimer. Homooligomer; disulfide-linked. Oligomerizes on the phospholipid membrane. Interacts with DYSF and CAV3. In terms of processing, disulfide bond formation at Cys-242 occurs in case of membrane damage that cause the entry of the oxidized milieu of the extracellular space, resulting in homooligomerization. Post-translationally, S-nitrosylation at Cys-144 stabilizes TRIM72 and protects against oxidation-induced protein degradation and cell death.

The protein localises to the cell membrane. It localises to the sarcolemma. Its subcellular location is the cytoplasmic vesicle membrane. It catalyses the reaction S-ubiquitinyl-[E2 ubiquitin-conjugating enzyme]-L-cysteine + [acceptor protein]-L-lysine = [E2 ubiquitin-conjugating enzyme]-L-cysteine + N(6)-ubiquitinyl-[acceptor protein]-L-lysine.. Its pathway is protein modification; protein ubiquitination. With respect to regulation, specifically binds phosphatidylserine. The binding to phospholipids enhances ubiquitination activity. Muscle-specific E3 ubiquitin-protein ligase that plays a central role in cell membrane repair by nucleating the assembly of the repair machinery at injury sites. Its ubiquitination activity is mediated by E2 ubiquitin-conjugating enzymes UBE2D1, UBE2D2 and UBE2D3. Acts as a sensor of oxidation: upon membrane damage, entry of extracellular oxidative environment results in disulfide bond formation and homooligomerization at the injury site. This oligomerization acts as a nucleation site for recruitment of TRIM72-containing vesicles to the injury site, leading to membrane patch formation. Probably acts upstream of the Ca(2+)-dependent membrane resealing process. Required for transport of DYSF to sites of cell injury during repair patch formation. Regulates membrane budding and exocytosis. May be involved in the regulation of the mobility of KCNB1-containing endocytic vesicles. This chain is Tripartite motif-containing protein 72, found in Rattus norvegicus (Rat).